The sequence spans 144 residues: 3-hydroxyacyl-[acyl-carrier-protein] dehydratase FabZ (144 aa).

Residue His-48 is part of the active site.

This sequence belongs to the thioester dehydratase family. FabZ subfamily.

It localises to the cytoplasm. The enzyme catalyses a (3R)-hydroxyacyl-[ACP] = a (2E)-enoyl-[ACP] + H2O. Functionally, involved in unsaturated fatty acids biosynthesis. Catalyzes the dehydration of short chain beta-hydroxyacyl-ACPs and long chain saturated and unsaturated beta-hydroxyacyl-ACPs. The chain is 3-hydroxyacyl-[acyl-carrier-protein] dehydratase FabZ from Listeria monocytogenes serotype 4b (strain CLIP80459).